A 331-amino-acid chain; its full sequence is Biotin synthase (331 aa).

The Radical SAM core domain maps to 43–267; it reads NTVQVSTLLS…LMPASYVRLS (225 aa). 3 residues coordinate [4Fe-4S] cluster: Cys58, Cys62, and Cys65. [2Fe-2S] cluster is bound by residues Cys102, Cys133, Cys193, and Arg265.

It belongs to the radical SAM superfamily. Biotin synthase family. In terms of assembly, homodimer. [4Fe-4S] cluster is required as a cofactor. [2Fe-2S] cluster serves as cofactor.

It catalyses the reaction (4R,5S)-dethiobiotin + (sulfur carrier)-SH + 2 reduced [2Fe-2S]-[ferredoxin] + 2 S-adenosyl-L-methionine = (sulfur carrier)-H + biotin + 2 5'-deoxyadenosine + 2 L-methionine + 2 oxidized [2Fe-2S]-[ferredoxin]. It functions in the pathway cofactor biosynthesis; biotin biosynthesis; biotin from 7,8-diaminononanoate: step 2/2. Functionally, catalyzes the conversion of dethiobiotin (DTB) to biotin by the insertion of a sulfur atom into dethiobiotin via a radical-based mechanism. The protein is Biotin synthase of Alkalilimnicola ehrlichii (strain ATCC BAA-1101 / DSM 17681 / MLHE-1).